Consider the following 727-residue polypeptide: Probable metal-nicotianamine transporter YSL14 (727 aa).

Composition is skewed to low complexity over residues 1 to 10 and 18 to 27; these read MAQHTAAAAG and AEAAAAAAAG. A disordered region spans residues 1 to 61; sequence MAQHTAAAAG…RNGGADDPDA (61 aa). The span at 45-54 shows a compositional bias: gly residues; it reads AGGGGGGRNG. 14 helical membrane passes run 84-104, 107-127, 152-172, 194-214, 256-276, 314-334, 359-379, 432-452, 460-480, 492-512, 546-566, 604-624, 646-666, and 681-701; these read AFVVSALLAVMFSVIVMKLNL, GIIPSLNVSAGLLGFFFVRLW, CVVSAYGIAFSGGFGSYLFGM, LGWMIGFLFLVSFIGLFALVP, LGKYFLFSFFWGFFQWFYTAG, IVNVSVLLGGILSWGVMWPLI, VFISIALILGDGLYNFLKVLI, VAYGGYVVVAALSIGTLPEIF, ILVAYIVAPVLAFCNAYGSGL, LAIFVFGAWAGLSHGGVLVGL, FISQVIGTGMGCVIAPCVFWL, PENCLTLCYIFFAAAIAINLI, FYIGSYFAIDMFLGSVILFVW, and VASGLICGDGIWTLPQSILAL.

This sequence belongs to the YSL (TC 2.A.67.2) family. In terms of tissue distribution, expressed in leaves and at low levels in roots.

The protein localises to the membrane. Its function is as follows. May be involved in the transport of nicotianamine-chelated metals. This chain is Probable metal-nicotianamine transporter YSL14 (YSL14), found in Oryza sativa subsp. japonica (Rice).